A 395-amino-acid chain; its full sequence is Elongation factor Tu (395 aa).

The tr-type G domain maps to 10–204 (KPHVNIGTIG…AVDEYIPTPQ (195 aa)). The tract at residues 19–26 (GHVDHGKT) is G1. A GTP-binding site is contributed by 19 to 26 (GHVDHGKT). Thr-26 is a Mg(2+) binding site. Residues 60–64 (GITIS) form a G2 region. A G3 region spans residues 81 to 84 (DCPG). GTP-binding positions include 81-85 (DCPGH) and 136-139 (NKCD). The tract at residues 136-139 (NKCD) is G4. The interval 174–176 (SAL) is G5.

This sequence belongs to the TRAFAC class translation factor GTPase superfamily. Classic translation factor GTPase family. EF-Tu/EF-1A subfamily. Monomer.

It is found in the cytoplasm. The catalysed reaction is GTP + H2O = GDP + phosphate + H(+). GTP hydrolase that promotes the GTP-dependent binding of aminoacyl-tRNA to the A-site of ribosomes during protein biosynthesis. The protein is Elongation factor Tu of Geobacillus sp. (strain WCH70).